We begin with the raw amino-acid sequence, 224 residues long: MQVLASLFGRSPFSPLQAHVELVSASIEVLFPLFSAIKEGDYQRVEALAQLVSSKERQADGVKNDIRSHLASGVFIPVSRLAMLEIISTQDSVADCAEDIAILLTVKELRFYPEFEEIFFQFLQKTVQSFEVVAKAIREMDLLLESSFGGCRAEKTRVLVNEVSNLEHECDLLQRELMKILFSENFSIETKDFVLWTQIIKRLSGISNNSEKLAYRVGMTLEEK.

Belongs to the UPF0111 family.

The polypeptide is UPF0111 protein TC_0063 (Chlamydia muridarum (strain MoPn / Nigg)).